A 335-amino-acid polypeptide reads, in one-letter code: UDP-3-O-acylglucosamine N-acyltransferase (335 aa).

The active-site Proton acceptor is H225.

The protein belongs to the transferase hexapeptide repeat family. LpxD subfamily. In terms of assembly, homotrimer.

The catalysed reaction is a UDP-3-O-[(3R)-3-hydroxyacyl]-alpha-D-glucosamine + a (3R)-hydroxyacyl-[ACP] = a UDP-2-N,3-O-bis[(3R)-3-hydroxyacyl]-alpha-D-glucosamine + holo-[ACP] + H(+). The protein operates within bacterial outer membrane biogenesis; LPS lipid A biosynthesis. Functionally, catalyzes the N-acylation of UDP-3-O-acylglucosamine using 3-hydroxyacyl-ACP as the acyl donor. Is involved in the biosynthesis of lipid A, a phosphorylated glycolipid that anchors the lipopolysaccharide to the outer membrane of the cell. This is UDP-3-O-acylglucosamine N-acyltransferase from Delftia acidovorans (strain DSM 14801 / SPH-1).